Consider the following 725-residue polypeptide: Dipeptidyl-peptidase 5 (725 aa).

The signal sequence occupies residues 1–18 (MGALRWLSIAATASTALA). Residues Asn75, Asn96, Asn153, Asn258, Asn383, and Asn453 are each glycosylated (N-linked (GlcNAc...) asparagine). Ser563 acts as the Charge relay system in catalysis. The N-linked (GlcNAc...) asparagine glycan is linked to Asn610. Catalysis depends on charge relay system residues Asp646 and His678.

The protein belongs to the peptidase S9C family.

Its subcellular location is the secreted. The polypeptide is Dipeptidyl-peptidase 5 (Aspergillus oryzae (strain ATCC 42149 / RIB 40) (Yellow koji mold)).